Here is a 549-residue protein sequence, read N- to C-terminus: Cytoplasmic trehalase (549 aa).

Residues arginine 168, 175-176 (WD), asparagine 212, 221-223 (RSQ), 292-294 (RDE), and glycine 324 each bind substrate. Catalysis depends on proton donor/acceptor residues aspartate 326 and glutamate 509. Glutamate 525 lines the substrate pocket.

The protein belongs to the glycosyl hydrolase 37 family. Monomer.

The protein localises to the cytoplasm. It carries out the reaction alpha,alpha-trehalose + H2O = alpha-D-glucose + beta-D-glucose. It participates in glycan degradation; trehalose degradation; D-glucose from alpha,alpha-trehalose: step 1/1. Functionally, hydrolyzes trehalose to glucose. Could be involved, in cells returning to low osmolarity conditions, in the utilization of the accumulated cytoplasmic trehalose, which was synthesized in response to high osmolarity. This is Cytoplasmic trehalase from Escherichia coli O127:H6 (strain E2348/69 / EPEC).